Consider the following 204-residue polypeptide: Linker for activation of T-cells family member 2 (204 aa).

The Extracellular portion of the chain corresponds to 1 to 7 (MNAELEL). The chain crosses the membrane as a helical; Signal-anchor for type III membrane protein span at residues 8-28 (LWPLSGLLLLLLLGTTAWLCV). S-palmitoyl cysteine attachment occurs at residues cysteine 27 and cysteine 30. Residues 29–204 (QCSRPGVKRN…NGDVATTEKI (176 aa)) lie on the Cytoplasmic side of the membrane. A Phosphotyrosine modification is found at tyrosine 60. Residues serine 61 and serine 96 each carry the phosphoserine modification. A phosphotyrosine mark is found at tyrosine 140, tyrosine 161, and tyrosine 193. The tract at residues 147–204 (KPSTPESGTEESEDYQNSVSILQWRESKRTMGARTSPSGSPDEEPDYVNGDVATTEKI) is disordered.

In terms of assembly, when phosphorylated, interacts with GRB2. May also interact with SOS1, GAB1 and CBL. Phosphorylated on tyrosines following cross-linking of BCR in B-cells, high affinity IgG receptor (FCGR1) in myeloid cells, or high affinity IgE receptor (FCER1) in mast cells; which induces the recruitment of GRB2.

Its subcellular location is the cell membrane. Functionally, involved in FCER1 (high affinity immunoglobulin epsilon receptor)-mediated signaling in mast cells. May also be involved in BCR (B-cell antigen receptor)-mediated signaling in B-cells and FCGR1 (high affinity immunoglobulin gamma Fc receptor I)-mediated signaling in myeloid cells. Couples activation of these receptors and their associated kinases with distal intracellular events through the recruitment of GRB2. The polypeptide is Linker for activation of T-cells family member 2 (Lat2) (Rattus norvegicus (Rat)).